A 153-amino-acid polypeptide reads, in one-letter code: Ribosome maturation factor RimP (153 aa).

The protein belongs to the RimP family.

The protein localises to the cytoplasm. Its function is as follows. Required for maturation of 30S ribosomal subunits. The sequence is that of Ribosome maturation factor RimP from Burkholderia pseudomallei (strain 1710b).